A 448-amino-acid polypeptide reads, in one-letter code: Chromosomal replication initiator protein DnaA (448 aa).

Residues 1–93 (MEQIVSSLWS…KPTEQNLSAS (93 aa)) are domain I, interacts with DnaA modulators. The segment at 94–110 (STNKEELTQDTVHKFKT) is domain II. A domain III, AAA+ region region spans residues 111-328 (GLNGRLTFDN…GAINRVSAWC (218 aa)). ATP contacts are provided by glycine 156, glycine 158, lysine 159, and threonine 160. The interval 329 to 448 (NFTKRQITID…YTNLTRKLSS (120 aa)) is domain IV, binds dsDNA.

Belongs to the DnaA family. As to quaternary structure, oligomerizes as a right-handed, spiral filament on DNA at oriC.

The protein localises to the cytoplasm. Plays an essential role in the initiation and regulation of chromosomal replication. ATP-DnaA binds to the origin of replication (oriC) to initiate formation of the DNA replication initiation complex once per cell cycle. Binds the DnaA box (a 9 base pair repeat at the origin) and separates the double-stranded (ds)DNA. Forms a right-handed helical filament on oriC DNA; dsDNA binds to the exterior of the filament while single-stranded (ss)DNA is stabiized in the filament's interior. The ATP-DnaA-oriC complex binds and stabilizes one strand of the AT-rich DNA unwinding element (DUE), permitting loading of DNA polymerase. After initiation quickly degrades to an ADP-DnaA complex that is not apt for DNA replication. Binds acidic phospholipids. In Haemophilus ducreyi (strain 35000HP / ATCC 700724), this protein is Chromosomal replication initiator protein DnaA.